Consider the following 344-residue polypeptide: Short chain dehydrogenase/reductase mfmJ (344 aa).

NADP(+) is bound by residues Leu51, Lys76, Asp99, Asn126, Tyr213, and Lys217. The active-site Proton donor is Tyr213. Residue Lys217 is the Lowers pKa of active site Tyr of the active site.

It belongs to the short-chain dehydrogenases/reductases (SDR) family.

Functionally, short chain dehydrogenase/reductase; part of the gene cluster that mediates the biosynthesis of the phthalide-terpenoid hybrid 11'-O-desmethylfendlerol. MfmJ seems not to be involved directly in the biosynthesis of 11'-O-desmethylfendlerol and its role has still to be determined. The biosynthesis of 11'-O-desmethylfendlerol begins with the NR-PKS mfmB that forms 3,5-dimethylorsellinic acid (DMOA), which is then transformed into the phthalide 5,7-dihydroxy-4-(hydroxymethyl)-6-methylphthalide by the cytochrome P450 monooxygenase mfmA and the hydrolase mfmC. Subsequently, the methyltransferase mfmE catalyzes 7-O-methylation to yield 5-hydroxy-4-(hydroxymethyl)-7-methoxy-6-methylphthalide, which undergoes C-3 hydroxylation by the cytochrome P450 monooxygenase mfmF. The resultant cyclopolic acid (2,5-dihydroxy-4-(hydroxymethyl)-7-methoxy-6-methylphthalide) is then farnesylated by the DMATS-type prenyltransferase mfmD to afford 5-O-farnesylcyclopolic acid. Finally, the Pyr4-family terpene cyclase mfmH cyclizes the farnesyl moiety of 5-O-farnesylcyclopolic acid into a drimane-like structure, thus completing the biosynthesis of 11'-O-desmethylfendlerol. The sequence is that of Short chain dehydrogenase/reductase mfmJ from Annulohypoxylon moriforme (Filamentous fungus).